Here is a 260-residue protein sequence, read N- to C-terminus: Type II methyltransferase M1.MboII (260 aa).

Residues C12, D30, K197, 223-225 (SGT), and 241-242 (DM) each bind S-adenosyl-L-methionine.

It belongs to the N(4)/N(6)-methyltransferase family. At low concentration exists as a monomer and homodimer. Probably binds to DNA as a monomer.

The enzyme catalyses a 2'-deoxyadenosine in DNA + S-adenosyl-L-methionine = an N(6)-methyl-2'-deoxyadenosine in DNA + S-adenosyl-L-homocysteine + H(+). Functionally, a beta subtype methylase that recognizes the double-stranded sequence 5'-GAAGA-3', methylates A-5 on the top strand, and protects the DNA from cleavage by the MboII endonuclease. It is not known if the cytosine of the complementary sequence TCTTC is also methylated by this enzyme. This chain is Type II methyltransferase M1.MboII, found in Moraxella bovis.